Here is a 421-residue protein sequence, read N- to C-terminus: 4-hydroxy-3-methylbut-2-en-1-yl diphosphate synthase (flavodoxin) (421 aa).

[4Fe-4S] cluster-binding residues include Cys-311, Cys-314, Cys-357, and Glu-364.

Belongs to the IspG family. [4Fe-4S] cluster serves as cofactor.

It catalyses the reaction (2E)-4-hydroxy-3-methylbut-2-enyl diphosphate + oxidized [flavodoxin] + H2O + 2 H(+) = 2-C-methyl-D-erythritol 2,4-cyclic diphosphate + reduced [flavodoxin]. It functions in the pathway isoprenoid biosynthesis; isopentenyl diphosphate biosynthesis via DXP pathway; isopentenyl diphosphate from 1-deoxy-D-xylulose 5-phosphate: step 5/6. Its function is as follows. Converts 2C-methyl-D-erythritol 2,4-cyclodiphosphate (ME-2,4cPP) into 1-hydroxy-2-methyl-2-(E)-butenyl 4-diphosphate. The chain is 4-hydroxy-3-methylbut-2-en-1-yl diphosphate synthase (flavodoxin) from Xanthomonas axonopodis pv. citri (strain 306).